The chain runs to 35 residues: Conotoxin Cal6.1g (35 aa).

The propeptide occupies 1–8 (GLSRPSKR). Intrachain disulfides connect C9-C25, C16-C29, and C24-C34.

It belongs to the conotoxin O1 superfamily. In terms of tissue distribution, expressed by the venom duct.

It localises to the secreted. Functionally, probable neurotoxin with unknown target. Possibly targets ion channels. The sequence is that of Conotoxin Cal6.1g from Californiconus californicus (California cone).